Reading from the N-terminus, the 179-residue chain is Cytochrome b6-f complex iron-sulfur subunit 1 (179 aa).

A helical transmembrane segment spans residues Leu21 to Ile43. A Rieske domain is found at Gly61 to Leu162. Residues Cys108, His110, Cys126, and His129 each coordinate [2Fe-2S] cluster. Cys113 and Cys128 are joined by a disulfide.

The protein belongs to the Rieske iron-sulfur protein family. As to quaternary structure, the 4 large subunits of the cytochrome b6-f complex are cytochrome b6, subunit IV (17 kDa polypeptide, PetD), cytochrome f and the Rieske protein, while the 4 small subunits are PetG, PetL, PetM and PetN. The complex functions as a dimer. The cofactor is [2Fe-2S] cluster.

Its subcellular location is the cellular thylakoid membrane. It carries out the reaction 2 oxidized [plastocyanin] + a plastoquinol + 2 H(+)(in) = 2 reduced [plastocyanin] + a plastoquinone + 4 H(+)(out). In terms of biological role, component of the cytochrome b6-f complex, which mediates electron transfer between photosystem II (PSII) and photosystem I (PSI), cyclic electron flow around PSI, and state transitions. The protein is Cytochrome b6-f complex iron-sulfur subunit 1 of Nostoc sp. (strain PCC 7120 / SAG 25.82 / UTEX 2576).